Here is a 171-residue protein sequence, read N- to C-terminus: RNA pyrophosphohydrolase (171 aa).

Residues 6 to 149 (GFRPNVGIIL…KREVYRRALK (144 aa)) enclose the Nudix hydrolase domain. A Nudix box motif is present at residues 39-60 (GGIKESESAEQALYRELQEEVG).

The protein belongs to the Nudix hydrolase family. RppH subfamily. Requires a divalent metal cation as cofactor.

Functionally, accelerates the degradation of transcripts by removing pyrophosphate from the 5'-end of triphosphorylated RNA, leading to a more labile monophosphorylated state that can stimulate subsequent ribonuclease cleavage. The chain is RNA pyrophosphohydrolase from Teredinibacter turnerae (strain ATCC 39867 / T7901).